Consider the following 579-residue polypeptide: Type II restriction enzyme FokI (579 aa).

Catalysis depends on residues aspartate 450, aspartate 467, and lysine 469.

In terms of assembly, monomer, in which form it can cleave DNA. Homodimer when bound to DNA. Mg(2+) is required as a cofactor.

It carries out the reaction Endonucleolytic cleavage of DNA to give specific double-stranded fragments with terminal 5'-phosphates.. Functionally, an S subtype restriction enzyme that recognizes the asymmetric double-stranded sequence 5'-GGATG-3' and cleaves respectively 14 bases after G-1 (top strand) and 13 bases before C-1 (bottom strand). The polypeptide is Type II restriction enzyme FokI (Planomicrobium okeanokoites (Planococcus okeanokoites)).